The following is a 726-amino-acid chain: Methionine--tRNA ligase (726 aa).

The 'HIGH' region motif lies at 12 to 22 (PYVNNIPHLGN). Zn(2+) contacts are provided by cysteine 143, cysteine 146, cysteine 155, and cysteine 158. A 'KMSKS' region motif is present at residues 330–334 (KFSKS). Lysine 333 lines the ATP pocket. The tRNA-binding domain maps to 562–667 (FSEQICLKTV…DNPIPGERVI (106 aa)).

This sequence belongs to the class-I aminoacyl-tRNA synthetase family. MetG type 1 subfamily. As to quaternary structure, homodimer. The cofactor is Zn(2+).

Its subcellular location is the cytoplasm. It catalyses the reaction tRNA(Met) + L-methionine + ATP = L-methionyl-tRNA(Met) + AMP + diphosphate. Is required not only for elongation of protein synthesis but also for the initiation of all mRNA translation through initiator tRNA(fMet) aminoacylation. This is Methionine--tRNA ligase from Borrelia duttonii (strain Ly).